Here is a 362-residue protein sequence, read N- to C-terminus: tRNA-specific 2-thiouridylase MnmA (362 aa).

ATP contacts are provided by residues Gly-13–Ser-20 and Met-39. The interaction with target base in tRNA stretch occupies residues Asn-99–Asp-101. Residue Cys-104 is the Nucleophile of the active site. Cys-104 and Cys-200 form a disulfide bridge. Gly-128 provides a ligand contact to ATP. Residues Lys-150 to Gln-152 form an interaction with tRNA region. The active-site Cysteine persulfide intermediate is the Cys-200. The interval Arg-310–Tyr-311 is interaction with tRNA.

Belongs to the MnmA/TRMU family.

It is found in the cytoplasm. It carries out the reaction S-sulfanyl-L-cysteinyl-[protein] + uridine(34) in tRNA + AH2 + ATP = 2-thiouridine(34) in tRNA + L-cysteinyl-[protein] + A + AMP + diphosphate + H(+). In terms of biological role, catalyzes the 2-thiolation of uridine at the wobble position (U34) of tRNA, leading to the formation of s(2)U34. This chain is tRNA-specific 2-thiouridylase MnmA, found in Vesicomyosocius okutanii subsp. Calyptogena okutanii (strain HA).